Here is a 264-residue protein sequence, read N- to C-terminus: MGQKIHPTGFRLAVSRNWASRWYASNTQFAGMLKEDIEVREFLKKKLKNASVGRVVIERPAKNARITIYSSRPGVVIGKKGEDIELLKAELQRRMGVPVHVNIEEIRKPEVDAQLIADSITQQLERRIMFRRAMKRAMQNAMRLGAQGIKIMSSGRLNGIEIARTEWYREGRVPLHTLRADIDYGFSEAETTYGIIGVKVWVYKGDHLGRNDAPVVEEPQEERRKRPGRPEGRRREGEGRPGGQRRGAGAGGRRSGGADAKTGE.

A KH type-2 domain is found at 39–107 (VREFLKKKLK…PVHVNIEEIR (69 aa)). Residues 211–264 (NDAPVVEEPQEERRKRPGRPEGRRREGEGRPGGQRRGAGAGGRRSGGADAKTGE) are disordered. Residues 221-239 (EERRKRPGRPEGRRREGEG) show a composition bias toward basic and acidic residues. Residues 240 to 255 (RPGGQRRGAGAGGRRS) are compositionally biased toward gly residues.

The protein belongs to the universal ribosomal protein uS3 family. In terms of assembly, part of the 30S ribosomal subunit. Forms a tight complex with proteins S10 and S14.

Its function is as follows. Binds the lower part of the 30S subunit head. Binds mRNA in the 70S ribosome, positioning it for translation. This is Small ribosomal subunit protein uS3 from Ralstonia nicotianae (strain ATCC BAA-1114 / GMI1000) (Ralstonia solanacearum).